A 541-amino-acid polypeptide reads, in one-letter code: Zinc finger CCHC domain-containing protein 7 (541 aa).

The tract at residues 111–144 is disordered; it reads AEEKTQSPATSHSNKVAQKCKRNNKKPKPEERPG. A compositionally biased stretch (polar residues) spans 116-126; it reads QSPATSHSNKV. Glycyl lysine isopeptide (Lys-Gly) (interchain with G-Cter in SUMO2) cross-links involve residues lysine 129, lysine 136, lysine 138, lysine 234, and lysine 249. 3 CCHC-type zinc fingers span residues 236–253, 258–275, and 299–316; these read VTCR…NCPL, RACC…GCPA, and KRCD…ACPE. Lysine 334 is covalently cross-linked (Glycyl lysine isopeptide (Lys-Gly) (interchain with G-Cter in SUMO2)). A CCHC-type 4 zinc finger spans residues 343–360; sequence VYCYNCAQKGHYGHECTE. The segment at 394–541 is disordered; the sequence is VKDLKKNGDF…KKKKPKPSGL (148 aa). Residues lysine 408 and lysine 431 each participate in a glycyl lysine isopeptide (Lys-Gly) (interchain with G-Cter in SUMO2) cross-link. Over residues 418–434 the composition is skewed to basic residues; the sequence is RRHHDMRKSRSPRKYRR. A compositionally biased stretch (basic and acidic residues) spans 435-452; the sequence is WPRENKETQKEKTRSREG. A Glycyl lysine isopeptide (Lys-Gly) (interchain with G-Cter in SUMO2) cross-link involves residue lysine 473. Residues 474-486 show a composition bias toward polar residues; sequence PNASGCANNQKPS. The residue at position 477 (serine 477) is a Phosphoserine. Residues lysine 484 and lysine 487 each participate in a glycyl lysine isopeptide (Lys-Gly) (interchain with G-Cter in SUMO2) cross-link. The span at 487-497 shows a compositional bias: basic residues; the sequence is KSLHHASHYHR. Basic and acidic residues-rich tracts occupy residues 498–509 and 517–527; these read LREERLLRESKR and STEDGSHDDLF. A Glycyl lysine isopeptide (Lys-Gly) (interchain with G-Cter in SUMO2) cross-link involves residue lysine 530. Residues 530-541 show a composition bias toward basic residues; it reads KQKKKKPKPSGL.

Component of a nucleolar TRAMP-like complex, an ATP-dependent exosome regulatory complex consisting of a helicase (MTREX), an oligadenylate polymerase (TENT4B or TENT4A), and a substrate specific RNA-binding factor (ZCCHC7 or ZCCHC8). Several TRAMP-like complexes exist with specific compositions and are associated with nuclear, or nucleolar RNA exosomes.

The protein localises to the nucleus. Its subcellular location is the nucleolus. The chain is Zinc finger CCHC domain-containing protein 7 (Zcchc7) from Mus musculus (Mouse).